Reading from the N-terminus, the 314-residue chain is Large ribosomal subunit protein uL10 (314 aa).

The disordered stretch occupies residues 281–314; it reads GSTQETPEEKKEEAKKEEKSPDESISEGLGALFQ. A compositionally biased stretch (basic and acidic residues) spans 287 to 302; it reads PEEKKEEAKKEEKSPD.

This sequence belongs to the universal ribosomal protein uL10 family. Part of the 50S ribosomal subunit. Forms part of the ribosomal stalk which helps the ribosome interact with GTP-bound translation factors. Forms a heptameric L10(L12)2(L12)2(L12)2 complex, where L10 forms an elongated spine to which the L12 dimers bind in a sequential fashion.

Forms part of the ribosomal stalk, playing a central role in the interaction of the ribosome with GTP-bound translation factors. The polypeptide is Large ribosomal subunit protein uL10 (Thermoplasma acidophilum (strain ATCC 25905 / DSM 1728 / JCM 9062 / NBRC 15155 / AMRC-C165)).